A 75-amino-acid chain; its full sequence is Large ribosomal subunit protein bL28 (75 aa).

A disordered region spans residues 1–21; that stretch reads MARVCQVTGKRPMSGNKRSHA.

This sequence belongs to the bacterial ribosomal protein bL28 family.

This chain is Large ribosomal subunit protein bL28, found in Blochmanniella pennsylvanica (strain BPEN).